The chain runs to 734 residues: Photosystem I P700 chlorophyll a apoprotein A2 (734 aa).

Helical transmembrane passes span 46–69 (IFASHFGQLAIIFLWTSGNLFHVA), 135–158 (LYTGALFLLFLSAISLIAGWLHLQ), 175–199 (LNHHLSGLFGVSSLAWTGHLVHVAI), 273–291 (IAHHHLAIAFIFLVAGHMY), 330–353 (LHFQLGLALASLGVITSLVAQHMY), 369–395 (AALYTHHQYIAGFIMTGAFAHGAIFFI), 417–439 (AIISHLSWASLFLGFHTLGLYVH), and 517–535 (FLVHHAIALGLHTTTLILV). [4Fe-4S] cluster contacts are provided by C559 and C568. 2 helical membrane passes run 575 to 596 (AFYLAVFWMLNTIGWVTFYWHW) and 643 to 665 (LSVWAWMFLFGHLVWATGFMFLI). Chlorophyll a contacts are provided by H654, M662, and Y670. Residue W671 participates in phylloquinone binding. Residues 707–727 (LVGLAHFSVGYIFTYAAFLIA) form a helical membrane-spanning segment.

It belongs to the PsaA/PsaB family. The PsaA/B heterodimer binds the P700 chlorophyll special pair and subsequent electron acceptors. PSI consists of a core antenna complex that captures photons, and an electron transfer chain that converts photonic excitation into a charge separation. The eukaryotic PSI reaction center is composed of at least 11 subunits. Requires P700 is a chlorophyll a/chlorophyll a' dimer, A0 is one or more chlorophyll a, A1 is one or both phylloquinones and FX is a shared 4Fe-4S iron-sulfur center. as cofactor.

It localises to the plastid. It is found in the chloroplast thylakoid membrane. The catalysed reaction is reduced [plastocyanin] + hnu + oxidized [2Fe-2S]-[ferredoxin] = oxidized [plastocyanin] + reduced [2Fe-2S]-[ferredoxin]. In terms of biological role, psaA and PsaB bind P700, the primary electron donor of photosystem I (PSI), as well as the electron acceptors A0, A1 and FX. PSI is a plastocyanin-ferredoxin oxidoreductase, converting photonic excitation into a charge separation, which transfers an electron from the donor P700 chlorophyll pair to the spectroscopically characterized acceptors A0, A1, FX, FA and FB in turn. Oxidized P700 is reduced on the lumenal side of the thylakoid membrane by plastocyanin. This chain is Photosystem I P700 chlorophyll a apoprotein A2, found in Citrus sinensis (Sweet orange).